The sequence spans 149 residues: UPF0251 protein Moth_1655 (149 aa).

The tract at residues 129–149 (AGRGPGRGRCHRHGRFGEGEH) is disordered.

Belongs to the UPF0251 family.

This is UPF0251 protein Moth_1655 from Moorella thermoacetica (strain ATCC 39073 / JCM 9320).